Reading from the N-terminus, the 363-residue chain is Protein-arginine kinase (363 aa).

The 232-residue stretch at 24-255 (IVLSSRIRLA…QQLIAQERAA (232 aa)) folds into the Phosphagen kinase C-terminal domain. ATP-binding positions include 27–31 (SSRIR), His-92, Arg-126, 177–181 (RASVM), and 208–213 (RGTYGE). Residues 338–343 (RDVRRA) carry the RDXXRA motif of the pArg binding pocket involved in allosteric regulation motif.

The protein belongs to the ATP:guanido phosphotransferase family.

The catalysed reaction is L-arginyl-[protein] + ATP = N(omega)-phospho-L-arginyl-[protein] + ADP + H(+). With respect to regulation, appears to be allosterically activated by the binding of pArg-containing polypeptides to the pArg-binding pocket localized in the C-terminal domain of McsB. Functionally, catalyzes the specific phosphorylation of arginine residues in a large number of proteins. Is part of the bacterial stress response system. Protein arginine phosphorylation has a physiologically important role and is involved in the regulation of many critical cellular processes, such as protein homeostasis, motility, competence, and stringent and stress responses, by regulating gene expression and protein activity. The chain is Protein-arginine kinase from Geobacillus kaustophilus (strain HTA426).